The primary structure comprises 259 residues: Phosphatidylserine decarboxylase proenzyme (259 aa).

The active-site Schiff-base intermediate with substrate; via pyruvic acid is serine 183. Serine 183 bears the Pyruvic acid (Ser); by autocatalysis mark.

It belongs to the phosphatidylserine decarboxylase family. PSD-A subfamily. In terms of assembly, heterodimer of a large membrane-associated beta subunit and a small pyruvoyl-containing alpha subunit. The cofactor is pyruvate. Post-translationally, is synthesized initially as an inactive proenzyme. Formation of the active enzyme involves a self-maturation process in which the active site pyruvoyl group is generated from an internal serine residue via an autocatalytic post-translational modification. Two non-identical subunits are generated from the proenzyme in this reaction, and the pyruvate is formed at the N-terminus of the alpha chain, which is derived from the carboxyl end of the proenzyme. The post-translation cleavage follows an unusual pathway, termed non-hydrolytic serinolysis, in which the side chain hydroxyl group of the serine supplies its oxygen atom to form the C-terminus of the beta chain, while the remainder of the serine residue undergoes an oxidative deamination to produce ammonia and the pyruvoyl prosthetic group on the alpha chain.

It is found in the cell membrane. The enzyme catalyses a 1,2-diacyl-sn-glycero-3-phospho-L-serine + H(+) = a 1,2-diacyl-sn-glycero-3-phosphoethanolamine + CO2. Its pathway is phospholipid metabolism; phosphatidylethanolamine biosynthesis; phosphatidylethanolamine from CDP-diacylglycerol: step 2/2. In terms of biological role, catalyzes the formation of phosphatidylethanolamine (PtdEtn) from phosphatidylserine (PtdSer). The polypeptide is Phosphatidylserine decarboxylase proenzyme (Neisseria gonorrhoeae (strain NCCP11945)).